A 269-amino-acid chain; its full sequence is Ribosomal RNA small subunit methyltransferase A (269 aa).

S-adenosyl-L-methionine contacts are provided by N20, L22, G47, E68, D90, and N110.

This sequence belongs to the class I-like SAM-binding methyltransferase superfamily. rRNA adenine N(6)-methyltransferase family. RsmA subfamily.

It localises to the cytoplasm. It carries out the reaction adenosine(1518)/adenosine(1519) in 16S rRNA + 4 S-adenosyl-L-methionine = N(6)-dimethyladenosine(1518)/N(6)-dimethyladenosine(1519) in 16S rRNA + 4 S-adenosyl-L-homocysteine + 4 H(+). In terms of biological role, specifically dimethylates two adjacent adenosines (A1518 and A1519) in the loop of a conserved hairpin near the 3'-end of 16S rRNA in the 30S particle. May play a critical role in biogenesis of 30S subunits. The sequence is that of Ribosomal RNA small subunit methyltransferase A from Chlorobium phaeobacteroides (strain DSM 266 / SMG 266 / 2430).